The following is a 430-amino-acid chain: Serine--tRNA ligase (430 aa).

237–239 (TAE) contacts L-serine. 268 to 270 (RSE) provides a ligand contact to ATP. L-serine is bound at residue E291. 355 to 358 (EISS) is an ATP binding site. S391 is a binding site for L-serine.

The protein belongs to the class-II aminoacyl-tRNA synthetase family. Type-1 seryl-tRNA synthetase subfamily. Homodimer. The tRNA molecule binds across the dimer.

Its subcellular location is the cytoplasm. It carries out the reaction tRNA(Ser) + L-serine + ATP = L-seryl-tRNA(Ser) + AMP + diphosphate + H(+). The enzyme catalyses tRNA(Sec) + L-serine + ATP = L-seryl-tRNA(Sec) + AMP + diphosphate + H(+). It functions in the pathway aminoacyl-tRNA biosynthesis; selenocysteinyl-tRNA(Sec) biosynthesis; L-seryl-tRNA(Sec) from L-serine and tRNA(Sec): step 1/1. Catalyzes the attachment of serine to tRNA(Ser). Is also able to aminoacylate tRNA(Sec) with serine, to form the misacylated tRNA L-seryl-tRNA(Sec), which will be further converted into selenocysteinyl-tRNA(Sec). The sequence is that of Serine--tRNA ligase from Salmonella paratyphi C (strain RKS4594).